The sequence spans 345 residues: Uroporphyrinogen decarboxylase (345 aa).

Residues arginine 23–arginine 27, aspartate 73, tyrosine 149, threonine 203, and histidine 319 contribute to the substrate site.

The protein belongs to the uroporphyrinogen decarboxylase family. Homodimer.

It localises to the cytoplasm. The enzyme catalyses uroporphyrinogen III + 4 H(+) = coproporphyrinogen III + 4 CO2. The protein operates within porphyrin-containing compound metabolism; protoporphyrin-IX biosynthesis; coproporphyrinogen-III from 5-aminolevulinate: step 4/4. In terms of biological role, catalyzes the decarboxylation of four acetate groups of uroporphyrinogen-III to yield coproporphyrinogen-III. The chain is Uroporphyrinogen decarboxylase from Vesicomyosocius okutanii subsp. Calyptogena okutanii (strain HA).